Reading from the N-terminus, the 676-residue chain is MEMSGLGRKRVSKWDSKEDTHHHHSSVNANSASYYRDKESEPVRFNAESNGEARTRSRVSQNNDNSYFSEQDGTRQQFVRRSGSRSNSRSRSRSRSPVYRARRDAGSYDRHKTRTQVSPTPIREFNKRGSDHLFDQSRSDHYGWEDNIRKPRETKYHTDDFREEAMMEGARSSDYNNTDYPEDNSRIRRRRSEFTGEKETQRRDGGDGEGGFHRSSNIPCKFFAAGTGFCRNGKYCRFSHHVADRKQPQDNNNNFYRQDNNNHTSGHNKWNDVERLDNGRVGGIEVSRASKKGVSESKGNGSSSWIDDMEMSPDWNYGVQALKKPVKEDHSVGIIGQSSQSRVLKDDQRSSGMFSHGGRTMAEKPVAASHQSYSNSVNVAPVETFNQNHNALPYQSSLTAGGSQQVLAAAATNFSVGSNLSNLESGKVYQDNHHSTVEKPVLVQNTVSREQIDQITNISASLAQFLANGQPIPQLEQALQLPLHSESVQPNQATTQSNVVSSNPNQLWGLGMSTGAEGVPAVTASKISNVEEIQEVSLDPKENGDKKTDEASKEEEGKKTGEDTNDAENVVDEDEDGDDDGSDEENKKEKDPKGMRAFKFALVEVVKELLKPAWKEGKLNKDGYKNIVKKVAEKVTGTMQSGNVPQTQEKIDHYLSASKPKLTKLVQAYVGKIKKT.

Disordered stretches follow at residues 1 to 134 (MEMS…DHLF), 172 to 217 (SSDY…RSSN), 245 to 307 (RKQP…SWID), 487 to 506 (SVQP…NPNQ), and 533 to 594 (IQEV…DPKG). Residues 12-21 (SKWDSKEDTH) are compositionally biased toward basic and acidic residues. A compositionally biased stretch (polar residues) spans 58–79 (RVSQNNDNSYFSEQDGTRQQFV). Composition is skewed to basic and acidic residues over residues 101–110 (ARRDAGSYDR), 124–134 (EFNKRGSDHLF), and 192–212 (SEFT…EGGF). A C3H1-type zinc finger spans residues 214–243 (RSSNIPCKFFAAGTGFCRNGKYCRFSHHVA). Residues 251–262 (NNNNFYRQDNNN) are compositionally biased toward low complexity. Basic and acidic residues predominate over residues 269–278 (KWNDVERLDN). Residues 538 to 562 (LDPKENGDKKTDEASKEEEGKKTGE) show a composition bias toward basic and acidic residues. The segment covering 563–583 (DTNDAENVVDEDEDGDDDGSD) has biased composition (acidic residues). Basic and acidic residues predominate over residues 584 to 594 (EENKKEKDPKG).

This is Zinc finger CCCH domain-containing protein 38 from Arabidopsis thaliana (Mouse-ear cress).